Reading from the N-terminus, the 450-residue chain is 23S rRNA (uracil(1939)-C(5))-methyltransferase RlmD (450 aa).

The 59-residue stretch at 12–70 folds into the TRAM domain; that stretch reads SKQLSAKLSLNVDQLDHLGAGIAQYQGKVVFIPGALPDETVTVQLTEQKKNYARAKLIK. [4Fe-4S] cluster contacts are provided by C83, C89, C92, and C171. 6 residues coordinate S-adenosyl-L-methionine: Q283, F312, N317, E333, D360, and D380. Residue C406 is the Nucleophile of the active site.

Belongs to the class I-like SAM-binding methyltransferase superfamily. RNA M5U methyltransferase family. RlmD subfamily.

It carries out the reaction uridine(1939) in 23S rRNA + S-adenosyl-L-methionine = 5-methyluridine(1939) in 23S rRNA + S-adenosyl-L-homocysteine + H(+). Functionally, catalyzes the formation of 5-methyl-uridine at position 1939 (m5U1939) in 23S rRNA. This Shewanella putrefaciens (strain CN-32 / ATCC BAA-453) protein is 23S rRNA (uracil(1939)-C(5))-methyltransferase RlmD.